The primary structure comprises 132 residues: Histone H2B.1 (132 aa).

Low complexity predominate over residues Met-1–Ala-13. Residues Met-1–Lys-39 are disordered. Lys-7 is modified (N6-acetyllysine; alternate). Lys-7 participates in a covalent cross-link: Glycyl lysine isopeptide (Lys-Gly) (interchain with G-Cter in SUMO); alternate. The residue at position 11 (Ser-11) is a Phosphoserine. Position 12 is an N6-acetyllysine (Lys-12). The residue at position 17 (Lys-17) is an N6-acetyllysine; alternate. A Glycyl lysine isopeptide (Lys-Gly) (interchain with G-Cter in SUMO); alternate cross-link involves residue Lys-17. Residue Lys-18 forms a Glycyl lysine isopeptide (Lys-Gly) (interchain with G-Cter in SUMO) linkage. A Glycyl lysine isopeptide (Lys-Gly) (interchain with G-Cter in ubiquitin) cross-link involves residue Lys-125.

Belongs to the histone H2B family. As to quaternary structure, the nucleosome is a histone octamer containing two molecules each of H2A, H2B, H3 and H4 assembled in one H3-H4 heterotetramer and two H2A-H2B heterodimers. The octamer wraps approximately 147 bp of DNA. In terms of processing, monoubiquitinated by the UBC2-BRE1 complex to form H2BK123ub1. H2BK123ub1 gives a specific tag for epigenetic transcriptional activation and is also prerequisite for H3K4me and H3K79me formation. H2BK123ub1 also modulates the formation of double-strand breaks during meiosis and is a prerequisite for DNA-damage checkpoint activation. Post-translationally, phosphorylated by STE20 to form H2BS10ph during progression through meiotic prophase. May be correlated with chromosome condensation. Acetylated by GCN5 to form H2BK11ac and H2BK16ac. H2BK16ac can also be formed by ESA1. Acetylation of N-terminal lysines and particularly formation of H2BK11acK16ac has a positive effect on transcription. In terms of processing, sumoylation to form H2BK6su and probably also H2BK16su or H2BK17su, occurs preferentially near the telomeres and represses gene transcription.

It localises to the nucleus. It is found in the chromosome. Functionally, core component of nucleosome. Nucleosomes wrap and compact DNA into chromatin, limiting DNA accessibility to the cellular machineries which require DNA as a template. Histones thereby play a central role in transcription regulation, DNA repair, DNA replication and chromosomal stability. DNA accessibility is regulated via a complex set of post-translational modifications of histones, also called histone code, and nucleosome remodeling. The protein is Histone H2B.1 (HTB1) of Kluyveromyces lactis (strain ATCC 8585 / CBS 2359 / DSM 70799 / NBRC 1267 / NRRL Y-1140 / WM37) (Yeast).